Here is a 577-residue protein sequence, read N- to C-terminus: Arginine--tRNA ligase (577 aa).

A 'HIGH' region motif is present at residues 122-132; it reads PNVAKEMHVGH.

This sequence belongs to the class-I aminoacyl-tRNA synthetase family. In terms of assembly, monomer.

It localises to the cytoplasm. The catalysed reaction is tRNA(Arg) + L-arginine + ATP = L-arginyl-tRNA(Arg) + AMP + diphosphate. The sequence is that of Arginine--tRNA ligase from Citrobacter koseri (strain ATCC BAA-895 / CDC 4225-83 / SGSC4696).